We begin with the raw amino-acid sequence, 245 residues long: Dehydrogenase/reductase SDR family member 6 (245 aa).

Residues 16 to 18 (QGI), aspartate 37, and aspartate 58 each bind NAD(+). Residue arginine 144 participates in substrate binding. The active-site Proton acceptor is the tyrosine 147. NAD(+)-binding positions include lysine 151 and 180–184 (VDTPS). 2 residues coordinate substrate: arginine 188 and arginine 205.

The protein belongs to the short-chain dehydrogenases/reductases (SDR) family. As to quaternary structure, homotetramer.

The protein localises to the cytoplasm. It catalyses the reaction cis-4-hydroxy-L-proline + NAD(+) = 4-oxo-L-proline + NADH + H(+). It carries out the reaction (R)-3-hydroxybutanoate + NAD(+) = acetoacetate + NADH + H(+). It functions in the pathway amino-acid metabolism. It participates in siderophore biosynthesis. Functionally, NAD(H)-dependent dehydrogenase/reductase with a preference for cyclic substrates. Catalyzes stereoselective conversion of 4-oxo-L-proline to cis-4-hydroxy-L-proline, likely a detoxification mechanism for ketoprolines. Mediates the formation of 2,5-dihydroxybenzoate (2,5-DHBA), a siderophore that chelates free cytoplasmic iron, thereby regulating iron transport and homeostasis while protecting cells against free radical-induced oxidative stress. The iron-siderophore complex is imported into mitochondria, providing an iron source for mitochondrial metabolic processes in particular heme synthesis. May act as a 3-hydroxybutyrate dehydrogenase. The polypeptide is Dehydrogenase/reductase SDR family member 6 (bdh2) (Danio rerio (Zebrafish)).